We begin with the raw amino-acid sequence, 124 residues long: Small ribosomal subunit protein uS12 (124 aa).

Asp89 bears the 3-methylthioaspartic acid mark.

This sequence belongs to the universal ribosomal protein uS12 family. As to quaternary structure, part of the 30S ribosomal subunit. Contacts proteins S8 and S17. May interact with IF1 in the 30S initiation complex.

Functionally, with S4 and S5 plays an important role in translational accuracy. Its function is as follows. Interacts with and stabilizes bases of the 16S rRNA that are involved in tRNA selection in the A site and with the mRNA backbone. Located at the interface of the 30S and 50S subunits, it traverses the body of the 30S subunit contacting proteins on the other side and probably holding the rRNA structure together. The combined cluster of proteins S8, S12 and S17 appears to hold together the shoulder and platform of the 30S subunit. This chain is Small ribosomal subunit protein uS12, found in Shewanella oneidensis (strain ATCC 700550 / JCM 31522 / CIP 106686 / LMG 19005 / NCIMB 14063 / MR-1).